We begin with the raw amino-acid sequence, 191 residues long: Dephospho-CoA kinase (191 aa).

A DPCK domain is found at 3–191 (AIGITGSYAS…NLIANLECRV (189 aa)). An ATP-binding site is contributed by 11–16 (ASGKTF).

Belongs to the CoaE family.

It is found in the cytoplasm. It catalyses the reaction 3'-dephospho-CoA + ATP = ADP + CoA + H(+). It participates in cofactor biosynthesis; coenzyme A biosynthesis; CoA from (R)-pantothenate: step 5/5. Its function is as follows. Catalyzes the phosphorylation of the 3'-hydroxyl group of dephosphocoenzyme A to form coenzyme A. This Rickettsia bellii (strain RML369-C) protein is Dephospho-CoA kinase.